A 292-amino-acid chain; its full sequence is Zinc finger protein SNAI3 (292 aa).

An SNAG domain region spans residues 1–20 (MPRSFLVKTHSSHRVPNYRR). 4 C2H2-type zinc fingers span residues 152 to 174 (FECFHCHKPYHTLAGLARHRQLH), 183 to 205 (FTCKYCDKEYTSLGALKMHIRTH), 209 to 231 (CTCKICGKAFSRPWLLQGHVRTH), and 237 to 259 (YACSHCSRAFADRSNLRAHLQTH). The C2H2-type 5; degenerate zinc-finger motif lies at 265 to 287 (YRCRRCTKTFSRMSLLARHEESG).

This sequence belongs to the snail C2H2-type zinc-finger protein family.

The protein localises to the nucleus. Its function is as follows. Seems to inhibit myoblast differentiation. Transcriptional repressor of E-box-dependent transactivation of downstream myogenic bHLHs genes. Binds preferentially to the canonical E-box sequences 5'-CAGGTG-3' and 5'-CACCTG-3'. This Homo sapiens (Human) protein is Zinc finger protein SNAI3 (SNAI3).